Here is a 313-residue protein sequence, read N- to C-terminus: tRNA pseudouridine synthase B (313 aa).

Asp48 serves as the catalytic Nucleophile.

It belongs to the pseudouridine synthase TruB family. Type 1 subfamily.

It carries out the reaction uridine(55) in tRNA = pseudouridine(55) in tRNA. Responsible for synthesis of pseudouridine from uracil-55 in the psi GC loop of transfer RNAs. The chain is tRNA pseudouridine synthase B from Saccharophagus degradans (strain 2-40 / ATCC 43961 / DSM 17024).